The sequence spans 317 residues: MTTALDQLKQYTTVVADTGDFQQLAQYKPQDATTNPSLILKAVQKDAYKPILEKTVRDHRNESTDFIIDRLLIAFGTEILKLIPGRVSTEVDARLSFDTQRSIEKGRELIKLYEAAGIGRERILIKLASTWEGIRAAEVLQKEGIKCNMTLLFSLVQAAACAEAGAQLISPFVGRIYDWYKKQAGAEWNEARDGGANDPGVQSVRRIYTYYKTFGYKTEVMGASFRTTSQITELAGCDLLTISPDLLQKLQESNETVARKLSPETLQDKPAERVAIDEASFRFQLNDEAMATEKLAEGIRVFAADAVKLEKLIDALR.

The Schiff-base intermediate with substrate role is filled by K126.

The protein belongs to the transaldolase family. Type 1 subfamily. In terms of assembly, homodimer.

It is found in the cytoplasm. The catalysed reaction is D-sedoheptulose 7-phosphate + D-glyceraldehyde 3-phosphate = D-erythrose 4-phosphate + beta-D-fructose 6-phosphate. The protein operates within carbohydrate degradation; pentose phosphate pathway; D-glyceraldehyde 3-phosphate and beta-D-fructose 6-phosphate from D-ribose 5-phosphate and D-xylulose 5-phosphate (non-oxidative stage): step 2/3. Transaldolase is important for the balance of metabolites in the pentose-phosphate pathway. The chain is Transaldolase from Burkholderia orbicola (strain AU 1054).